The sequence spans 117 residues: Large ribosomal subunit protein bL20 (117 aa).

This sequence belongs to the bacterial ribosomal protein bL20 family.

In terms of biological role, binds directly to 23S ribosomal RNA and is necessary for the in vitro assembly process of the 50S ribosomal subunit. It is not involved in the protein synthesizing functions of that subunit. The protein is Large ribosomal subunit protein bL20 of Rickettsia bellii (strain OSU 85-389).